A 273-amino-acid chain; its full sequence is Probable NAD(P)H dehydrogenase (quinone) FQR1-like 2 (273 aa).

The interval 1–60 (MGKGGGCVPSKKKKPATTGDGPGIDDDNDATNAPIQIDDDQTTIDGDRTTATNTGGTTTP) is disordered. Over residues 49–60 (TTATNTGGTTTP) the composition is skewed to low complexity. Residues 75–263 (IFVVFYSMYG…ALAEHQGNYM (189 aa)) enclose the Flavodoxin-like domain. FMN is bound by residues 81-85 (SMYGH), 183-236 (FFVS…SPYG), and H207. Position 83 (Y83) interacts with NAD(+).

Belongs to the WrbA family. The cofactor is FMN.

The protein localises to the cell membrane. It carries out the reaction a quinone + NADH + H(+) = a quinol + NAD(+). The catalysed reaction is a quinone + NADPH + H(+) = a quinol + NADP(+). Catalyzes the transfer of electrons from NADH and NADPH to reduce quinone to the hydroquinone state. The polypeptide is Probable NAD(P)H dehydrogenase (quinone) FQR1-like 2 (Arabidopsis thaliana (Mouse-ear cress)).